The sequence spans 200 residues: ATP synthase subunit s, mitochondrial (200 aa).

The N-terminal 25 residues, 1-25, are a transit peptide targeting the mitochondrion; that stretch reads MMLFGKISQQLCGLKKLPWSRDSRY. The tract at residues 1-61 is N-terminal domain; that stretch reads MMLFGKISQQ…SEWLLRCGAM (61 aa). Residue Gly-59 coordinates Mg(2+). LRR repeat units follow at residues 62–87, 88–116, 117–141, and 142–173; these read VRYH…KYKI, QAID…KIRL, CKCH…KSML, and EMEI…LSDL. Thr-93 contacts Mg(2+).

The protein belongs to the ATP synthase subunit s family. As to quaternary structure, homotetramer. Associates with ATP synthase.

The protein resides in the mitochondrion. It localises to the mitochondrion inner membrane. Its function is as follows. Involved in regulation of mitochondrial membrane ATP synthase. Necessary for H(+) conduction of ATP synthase. Facilitates energy-driven catalysis of ATP synthesis by blocking a proton leak through an alternative proton exit pathway. This chain is ATP synthase subunit s, mitochondrial (DMAC2L), found in Bos taurus (Bovine).